The following is a 133-amino-acid chain: DUF35 domain-containing scaffold protein (133 aa).

Positions 23, 26, 37, and 40 each coordinate Zn(2+).

It belongs to the scaffold protein DUF35 family. Interacts with acetoacetyl-CoA thiolase and HMG-CoA synthase (HMGCS) that catalyzes the first and second step in the mevalonate pathway, respectively.

Functionally, functions as a scaffold to connect the acetoacetyl-CoA thiolase and HMG-CoA synthase (HMGCS) dimers in the channeling thiolase/HMGCS complex, which allows for efficient coupling of the endergonic thiolase reaction with the exergonic HMGCS reaction. The protein is DUF35 domain-containing scaffold protein of Methanothermobacter thermautotrophicus (strain ATCC 29096 / DSM 1053 / JCM 10044 / NBRC 100330 / Delta H) (Methanobacterium thermoautotrophicum).